The primary structure comprises 878 residues: Aminopeptidase M1-C (878 aa).

Residues 102-209 form a required for membrane association region; the sequence is LGEGVLAMDF…MSTYLVAIVV (108 aa). Substrate contacts are provided by residues Glu142 and 275–279; that span reads GAMEN. His311 is a Zn(2+) binding site. The Proton acceptor role is filled by Glu312. The Zn(2+) site is built by His315 and Glu334. A Dileucine internalization motif motif is present at residues 726-727; it reads LL.

It belongs to the peptidase M1 family. As to quaternary structure, homodimer. Zn(2+) serves as cofactor.

It localises to the membrane. It is found in the microsome membrane. The protein resides in the cytoplasm. It catalyses the reaction Release of an N-terminal amino acid, Xaa-|-Yaa- from a peptide, amide or arylamide. Xaa is preferably Ala, but may be most amino acids including Pro (slow action). When a terminal hydrophobic residue is followed by a prolyl residue, the two may be released as an intact Xaa-Pro dipeptide.. The polypeptide is Aminopeptidase M1-C (Oryza sativa subsp. japonica (Rice)).